Consider the following 600-residue polypeptide: NADH-quinone oxidoreductase subunit C/D (600 aa).

The NADH dehydrogenase I subunit C stretch occupies residues 1-190 (MVNNMTDLTA…SPFELTKAKQ (190 aa)). The NADH dehydrogenase I subunit D stretch occupies residues 214–600 (DFMFLNLGPN…IDFVMSDVDR (387 aa)).

The protein in the N-terminal section; belongs to the complex I 30 kDa subunit family. It in the C-terminal section; belongs to the complex I 49 kDa subunit family. In terms of assembly, NDH-1 is composed of 13 different subunits. Subunits NuoB, CD, E, F, and G constitute the peripheral sector of the complex.

Its subcellular location is the cell inner membrane. The catalysed reaction is a quinone + NADH + 5 H(+)(in) = a quinol + NAD(+) + 4 H(+)(out). Its function is as follows. NDH-1 shuttles electrons from NADH, via FMN and iron-sulfur (Fe-S) centers, to quinones in the respiratory chain. The immediate electron acceptor for the enzyme in this species is believed to be ubiquinone. Couples the redox reaction to proton translocation (for every two electrons transferred, four hydrogen ions are translocated across the cytoplasmic membrane), and thus conserves the redox energy in a proton gradient. The protein is NADH-quinone oxidoreductase subunit C/D of Escherichia coli O6:H1 (strain CFT073 / ATCC 700928 / UPEC).